The following is a 108-amino-acid chain: Trp operon repressor homolog (108 aa).

Residues 59–82 (QRQISQLLGVGVATITRGSNELKS) mediate DNA binding.

The protein belongs to the TrpR family. In terms of assembly, homodimer.

It localises to the cytoplasm. In terms of biological role, this protein is an aporepressor. When complexed with L-tryptophan it binds the operator region of the trp operon and prevents the initiation of transcription. This is Trp operon repressor homolog from Aliivibrio salmonicida (strain LFI1238) (Vibrio salmonicida (strain LFI1238)).